Here is a 265-residue protein sequence, read N- to C-terminus: Insulin-like growth factor-binding protein 2-B (265 aa).

The first 17 residues, 1–17 (MSLALLCSLLLVHGSLG), serve as a signal peptide directing secretion. An IGFBP N-terminal domain is found at 19–99 (IVFRCPSCTA…IQGLGRCENK (81 aa)). Intrachain disulfides connect cysteine 23-cysteine 49, cysteine 26-cysteine 51, cysteine 34-cysteine 52, cysteine 41-cysteine 55, cysteine 63-cysteine 76, and cysteine 70-cysteine 96. The span at 107 to 122 (TNQESAAHSGEVNGTR) shows a compositional bias: polar residues. 2 disordered regions span residues 107-128 (TNQE…PMKK) and 144-170 (HHNN…SQCQ). Positions 166–248 (QSQCQQELDK…SDKVRGDPNC (83 aa)) constitute a Thyroglobulin type-1 domain. 3 cysteine pairs are disulfide-bonded: cysteine 169–cysteine 203, cysteine 214–cysteine 225, and cysteine 227–cysteine 248. Residues 238-265 (SSDKVRGDPNCSQYYGGPELEPPTAQQK) form a disordered region. The Cell attachment site signature appears at 243–245 (RGD).

Interacts with igf2. Interacts with igf1. In terms of tissue distribution, in early embryos, expressed at a low level in most tissues with expression becoming abundant in the liver by 96 hours post-fertilization (hpf). The expression pattern in adults exhibits sexual dimorphism; in adult males expression is limited exclusively to the liver whereas in adult females expression is observed in the liver and other tissues including the gut, kidney, ovary and muscle.

It is found in the secreted. In terms of biological role, IGF-binding proteins prolong the half-life of the IGFs and have been shown to either inhibit or stimulate the growth promoting effects of the IGFs on cell culture. They alter the interaction of IGFs with their cell surface receptors. This Danio rerio (Zebrafish) protein is Insulin-like growth factor-binding protein 2-B.